The primary structure comprises 159 residues: Phosphoribosylaminoimidazole carboxylase (159 aa).

Substrate is bound by residues S11, D14, S38, K41, G67, and S69.

The enzyme catalyses 5-amino-1-(5-phospho-D-ribosyl)imidazole-4-carboxylate + H(+) = 5-amino-1-(5-phospho-beta-D-ribosyl)imidazole + CO2. The protein operates within purine metabolism; IMP biosynthesis via de novo pathway; 5-amino-1-(5-phospho-D-ribosyl)imidazole-4-carboxylate from 5-amino-1-(5-phospho-D-ribosyl)imidazole (carboxylase route): step 1/1. In terms of biological role, catalyzes the reversible conversion of 5-aminoimidazole ribonucleotide (AIR) and CO(2) to 4-carboxy-5-aminoimidazole ribonucleotide (CAIR). Does not accept N5-carboxyaminoimidazole ribonucleotide (N5-CAIR) as a substrate. This is Phosphoribosylaminoimidazole carboxylase from Treponema denticola (strain ATCC 35405 / DSM 14222 / CIP 103919 / JCM 8153 / KCTC 15104).